The chain runs to 285 residues: Stress response regulator protein 1 (285 aa).

Composition is skewed to low complexity over residues 43-58 (DTSS…SSNN) and 128-138 (SIISSKSSNKS). Disordered regions lie at residues 43 to 66 (DTSS…SDQQ) and 114 to 142 (PLTP…TTVV). The Response regulatory domain maps to 158–276 (SFLIVDDNII…LDFMANSIDD (119 aa)). A 4-aspartylphosphate modification is found at Asp-209.

Required for stress adaptation, morphogenesis and virulence. The chain is Stress response regulator protein 1 (SRR1) from Candida dubliniensis (strain CD36 / ATCC MYA-646 / CBS 7987 / NCPF 3949 / NRRL Y-17841) (Yeast).